The following is a 199-amino-acid chain: FMN-dependent NADH:quinone oxidoreductase 2 (199 aa).

FMN is bound by residues Ser-10, 16-18 (SVS), and 96-99 (MYNF).

It belongs to the azoreductase type 1 family. In terms of assembly, homodimer. FMN serves as cofactor.

The enzyme catalyses 2 a quinone + NADH + H(+) = 2 a 1,4-benzosemiquinone + NAD(+). The catalysed reaction is N,N-dimethyl-1,4-phenylenediamine + anthranilate + 2 NAD(+) = 2-(4-dimethylaminophenyl)diazenylbenzoate + 2 NADH + 2 H(+). In terms of biological role, quinone reductase that provides resistance to thiol-specific stress caused by electrophilic quinones. Also exhibits azoreductase activity. Catalyzes the reductive cleavage of the azo bond in aromatic azo compounds to the corresponding amines. The protein is FMN-dependent NADH:quinone oxidoreductase 2 of Pseudomonas putida (strain ATCC 47054 / DSM 6125 / CFBP 8728 / NCIMB 11950 / KT2440).